The following is a 189-amino-acid chain: Xanthine phosphoribosyltransferase (189 aa).

Positions 20 and 27 each coordinate xanthine. 128–132 (ANGEA) is a binding site for 5-phospho-alpha-D-ribose 1-diphosphate. Residue lysine 156 coordinates xanthine.

It belongs to the purine/pyrimidine phosphoribosyltransferase family. Xpt subfamily. In terms of assembly, homodimer.

It is found in the cytoplasm. It carries out the reaction XMP + diphosphate = xanthine + 5-phospho-alpha-D-ribose 1-diphosphate. It functions in the pathway purine metabolism; XMP biosynthesis via salvage pathway; XMP from xanthine: step 1/1. Converts the preformed base xanthine, a product of nucleic acid breakdown, to xanthosine 5'-monophosphate (XMP), so it can be reused for RNA or DNA synthesis. In Clostridium acetobutylicum (strain ATCC 824 / DSM 792 / JCM 1419 / IAM 19013 / LMG 5710 / NBRC 13948 / NRRL B-527 / VKM B-1787 / 2291 / W), this protein is Xanthine phosphoribosyltransferase.